A 529-amino-acid chain; its full sequence is Bifunctional purine biosynthesis protein PurH (529 aa).

Residues 1–148 form the MGS-like domain; that stretch reads MNNARPIRRA…KNHKDTTIIV (148 aa).

Belongs to the PurH family.

The catalysed reaction is (6R)-10-formyltetrahydrofolate + 5-amino-1-(5-phospho-beta-D-ribosyl)imidazole-4-carboxamide = 5-formamido-1-(5-phospho-D-ribosyl)imidazole-4-carboxamide + (6S)-5,6,7,8-tetrahydrofolate. The enzyme catalyses IMP + H2O = 5-formamido-1-(5-phospho-D-ribosyl)imidazole-4-carboxamide. It participates in purine metabolism; IMP biosynthesis via de novo pathway; 5-formamido-1-(5-phospho-D-ribosyl)imidazole-4-carboxamide from 5-amino-1-(5-phospho-D-ribosyl)imidazole-4-carboxamide (10-formyl THF route): step 1/1. It functions in the pathway purine metabolism; IMP biosynthesis via de novo pathway; IMP from 5-formamido-1-(5-phospho-D-ribosyl)imidazole-4-carboxamide: step 1/1. The protein is Bifunctional purine biosynthesis protein PurH of Shewanella halifaxensis (strain HAW-EB4).